The chain runs to 1444 residues: Rho GTPase-activating protein 31 (1444 aa).

In terms of domain architecture, Rho-GAP spans 21-216 (CDLTEYLESS…FILNHVDQIF (196 aa)). S272 carries the phosphoserine modification. T286 is subject to Phosphothreonine. Phosphoserine occurs at positions 346, 349, and 387. The segment at 398–427 (WGQEGMPPGAEGGFDVSSDRSHLQGAQARP) is disordered. Position 476 is a phosphoserine (S476). A disordered region spans residues 504-631 (TNSTPCRTPP…ESSTLQESPR (128 aa)). Over residues 515-534 (ELQSLSSLEEFSFHGSESGG) the composition is skewed to low complexity. Positions 600–619 (NELEKRPNPEKVVEEGREAG) are enriched in basic and acidic residues. At T679 the chain carries Phosphothreonine. Disordered stretches follow at residues 688 to 893 (SSLG…EDDT) and 906 to 1108 (EPWE…SSLN). 2 positions are modified to phosphoserine: S701 and S712. Positions 722-734 (PANQSTQGASTAA) are enriched in polar residues. Positions 735–745 (SREKPEPEQGL) are enriched in basic and acidic residues. Positions 777 to 790 (LSPPLPPAPPPPTP) are enriched in pro residues. Residue S778 is modified to Phosphoserine. T789 is subject to Phosphothreonine. A compositionally biased stretch (basic and acidic residues) spans 803 to 817 (GPEREDSSRKLRTDL). Residues 822–834 (LKSQDSPEISSLC) show a composition bias toward polar residues. A compositionally biased stretch (basic and acidic residues) spans 839-848 (ATPRHSDKQN). Residues 960-977 (TVKSQWTLEVPSSSSCAN) show a composition bias toward polar residues. Phosphoserine is present on S974. The span at 992-1008 (PRREITGWDEKALRSFR) shows a compositional bias: basic and acidic residues. The span at 1028–1038 (VQPNPAETSPI) shows a compositional bias: polar residues. Positions 1064–1075 (GPESSKESSPSV) are enriched in low complexity. Phosphoserine occurs at positions 1105, 1106, and 1178. Composition is skewed to polar residues over residues 1211 to 1224 (QIPQPLPSQSSGEN) and 1234 to 1245 (EGPSSTSGTTQK). The segment at 1211-1346 (QIPQPLPSQS…HRSRPGRPQS (136 aa)) is disordered. The segment covering 1246 to 1265 (PAKDDSPSSLESSKEEKPKQ) has biased composition (basic and acidic residues). 2 stretches are compositionally biased toward polar residues: residues 1292 to 1303 (PGSSNLLSTQDA) and 1314 to 1323 (TEPSGDNLLS).

Interacts with ITSN1, which inhibits GAP activity. Interacts with PARVA. Interacts with GTP-loaded RHOU. In terms of processing, phosphorylation on Thr-789 reduces GAP activity.

It localises to the cell projection. It is found in the lamellipodium. The protein resides in the cell junction. Its subcellular location is the focal adhesion. In terms of biological role, functions as a GTPase-activating protein (GAP) for RAC1 and CDC42. Required for cell spreading, polarized lamellipodia formation and cell migration. This is Rho GTPase-activating protein 31 (ARHGAP31) from Homo sapiens (Human).